Consider the following 325-residue polypeptide: MKKWQLVGTTVLGASVLLGACGGNDGGSGDGKDLKGSAKGEGSSTVAPIVEKLNEKWAKDHKDAKISSGQAGTGAGFQKFIAGETDFSDASRPIKDEEKKKLEDKGIKYHEFKIAQDGVTIAVNKDNDFVKELTKSQLKDIYSGKAKTWKDVNSSWPDKKINAVSPNSSHGTYDFFEEEVMDKQDIKAEKNADTNAIVSSVTKNKEGIGYFGYNFYEQNKDKLKEVKIKDDNGKVTEPTKKTIQNGSYALSRPLFIYAKDKSLKDNKVMSEFMKFVLEDEGKAAEDAGYVASPKKTYKSQLDDLKDFLDKHQKSDKKDDKKSEDK.

An N-terminal signal peptide occupies residues 1-20 (MKKWQLVGTTVLGASVLLGA). C21 carries N-palmitoyl cysteine lipidation. A lipid anchor (S-diacylglycerol cysteine) is attached at C21. The interval 23 to 46 (GNDGGSGDGKDLKGSAKGEGSSTV) is disordered.

Belongs to the PstS family. The complex is composed of two ATP-binding proteins (PstB), two transmembrane proteins (PstC and PstA) and a solute-binding protein (PstS).

The protein localises to the cell membrane. Its function is as follows. Part of the ABC transporter complex PstSACB involved in phosphate import. This Staphylococcus epidermidis (strain ATCC 12228 / FDA PCI 1200) protein is Phosphate-binding protein PstS (pstS).